A 289-amino-acid polypeptide reads, in one-letter code: Caffeoylpyruvate hydrolase (289 aa).

Positions 140, 142, and 171 each coordinate a divalent metal cation.

This sequence belongs to the FAH family. In terms of assembly, homodimer. It depends on Mg(2+) as a cofactor. Mn(2+) serves as cofactor.

It carries out the reaction (E)-caffeoylpyruvate + H2O = (E)-caffeate + pyruvate + H(+). It functions in the pathway secondary metabolite biosynthesis. Its function is as follows. Caffeoylpyruvate hydrolase; part of the gene cluster that mediates the fungal bioluminescence cycle. Involved in the recycling of oxyluciferin, a pyruvic acid adduct of caffeic acid, to caffeic acid. The fungal bioluminescence cycle begins with the hispidin synthetase that catalyzes the formation of hispidin which is further hydroxylated by the hispidin-3-hydroxylase, yielding the fungal luciferin 3-hydroxyhispidin. The luciferase then produces an endoperoxide as a high-energy intermediate with decomposition that yields oxyluciferin (also known as caffeoylpyruvate) and light emission. Oxyluciferin can be recycled to caffeic acid by caffeoylpyruvate hydrolase. In Neonothopanus nambi (Agaricus nambi), this protein is Caffeoylpyruvate hydrolase.